A 173-amino-acid chain; its full sequence is Large ribosomal subunit protein uL18 (173 aa).

It belongs to the universal ribosomal protein uL18 family. As to quaternary structure, part of the 50S ribosomal subunit. Contacts the 5S and 23S rRNAs.

Functionally, this is one of the proteins that bind and probably mediate the attachment of the 5S RNA into the large ribosomal subunit, where it forms part of the central protuberance. The chain is Large ribosomal subunit protein uL18 from Methanococcoides burtonii (strain DSM 6242 / NBRC 107633 / OCM 468 / ACE-M).